The primary structure comprises 487 residues: Bifunctional protein HldE (487 aa).

Residues 1 to 326 (MERREVESFF…QEIVAEVGHG (326 aa)) are ribokinase. 205–208 (NRKE) is an ATP binding site. Asp-275 is a catalytic residue. A cytidylyltransferase region spans residues 356 to 487 (FTNGCFDLLH…RIIEKILSSY (132 aa)).

In the N-terminal section; belongs to the carbohydrate kinase PfkB family. The protein in the C-terminal section; belongs to the cytidylyltransferase family. Homodimer.

The catalysed reaction is D-glycero-beta-D-manno-heptose 7-phosphate + ATP = D-glycero-beta-D-manno-heptose 1,7-bisphosphate + ADP + H(+). It carries out the reaction D-glycero-beta-D-manno-heptose 1-phosphate + ATP + H(+) = ADP-D-glycero-beta-D-manno-heptose + diphosphate. The protein operates within nucleotide-sugar biosynthesis; ADP-L-glycero-beta-D-manno-heptose biosynthesis; ADP-L-glycero-beta-D-manno-heptose from D-glycero-beta-D-manno-heptose 7-phosphate: step 1/4. It functions in the pathway nucleotide-sugar biosynthesis; ADP-L-glycero-beta-D-manno-heptose biosynthesis; ADP-L-glycero-beta-D-manno-heptose from D-glycero-beta-D-manno-heptose 7-phosphate: step 3/4. In terms of biological role, catalyzes the phosphorylation of D-glycero-D-manno-heptose 7-phosphate at the C-1 position to selectively form D-glycero-beta-D-manno-heptose-1,7-bisphosphate. Catalyzes the ADP transfer from ATP to D-glycero-beta-D-manno-heptose 1-phosphate, yielding ADP-D-glycero-beta-D-manno-heptose. The sequence is that of Bifunctional protein HldE from Citrifermentans bemidjiense (strain ATCC BAA-1014 / DSM 16622 / JCM 12645 / Bem) (Geobacter bemidjiensis).